The following is a 358-amino-acid chain: F-box only protein 25 (358 aa).

Residues 1-83 (MPFLGQDWRS…NDTNTQSFYR (83 aa)) form an interaction with beta-actin region. An F-box domain is found at 226-274 (LTLSDLPLHMLNNILYRFSDGWDIITLGQVTPTLYMLSEDRQLWKKLCQ).

As to quaternary structure, part of a SCF (SKP1-cullin-F-box) protein ligase complex consisting of FBXO25, SKP1, CUL1 and RBX1. Interacts directly with SKP1 and CUL1. Interacts (via C-terminus) with beta-actin (via N-terminus).

It localises to the nucleus. It participates in protein modification; protein ubiquitination. In terms of biological role, substrate-recognition component of the SCF (SKP1-CUL1-F-box protein)-type E3 ubiquitin ligase complex. May play a role in accumulation of expanded polyglutamine (polyQ) protein huntingtin (HTT). This chain is F-box only protein 25 (FBXO25), found in Macaca fascicularis (Crab-eating macaque).